Here is a 439-residue protein sequence, read N- to C-terminus: uncharacterized protein (439 aa).

The 324-residue stretch at 116-439 (GKAASYRAAQ…PMRTPLQEAE (324 aa)) folds into the YcaO domain.

This is an uncharacterized protein from Mycobacterium tuberculosis (strain CDC 1551 / Oshkosh).